A 51-amino-acid polypeptide reads, in one-letter code: Large ribosomal subunit protein bL33 (51 aa).

This sequence belongs to the bacterial ribosomal protein bL33 family.

The sequence is that of Large ribosomal subunit protein bL33 from Alkalilimnicola ehrlichii (strain ATCC BAA-1101 / DSM 17681 / MLHE-1).